A 24-amino-acid chain; its full sequence is FFPAIFRLVAKVVPSIICSVTKKC.

Cysteine 18 and cysteine 24 are oxidised to a cystine.

In terms of tissue distribution, expressed by the skin glands.

It is found in the secreted. In terms of biological role, antimicrobial peptide. This is Brevinin-1R from Pelophylax ridibundus (Marsh frog).